The primary structure comprises 357 residues: Peptide chain release factor 1 (357 aa).

Glutamine 233 is subject to N5-methylglutamine.

This sequence belongs to the prokaryotic/mitochondrial release factor family. Methylated by PrmC. Methylation increases the termination efficiency of RF1.

It localises to the cytoplasm. In terms of biological role, peptide chain release factor 1 directs the termination of translation in response to the peptide chain termination codons UAG and UAA. The polypeptide is Peptide chain release factor 1 (Syntrophus aciditrophicus (strain SB)).